We begin with the raw amino-acid sequence, 31 residues long: Toxin BmKK12 (31 aa).

Pyrrolidone carboxylic acid is present on Gln1. 3 disulfide bridges follow: Cys4/Cys20, Cys10/Cys25, and Cys14/Cys27. Pro31 is modified (proline amide).

It belongs to the short scorpion toxin superfamily. Potassium channel inhibitor family. Alpha-KTx 17 subfamily. In terms of processing, the N-terminus is blocked. In terms of tissue distribution, expressed by the venom gland.

The protein localises to the secreted. Blocker of potassium channels (Kv). This chain is Toxin BmKK12, found in Olivierus martensii (Manchurian scorpion).